The following is a 237-amino-acid chain: Orotidine 5'-phosphate decarboxylase (237 aa).

Residues D11, K34, 61–70 (DLKLHDIPNT), T124, R186, Q195, G215, and R216 each bind substrate. K63 (proton donor) is an active-site residue.

The protein belongs to the OMP decarboxylase family. Type 1 subfamily. Homodimer.

It catalyses the reaction orotidine 5'-phosphate + H(+) = UMP + CO2. The protein operates within pyrimidine metabolism; UMP biosynthesis via de novo pathway; UMP from orotate: step 2/2. In terms of biological role, catalyzes the decarboxylation of orotidine 5'-monophosphate (OMP) to uridine 5'-monophosphate (UMP). In Lactococcus lactis subsp. cremoris (strain MG1363), this protein is Orotidine 5'-phosphate decarboxylase.